Reading from the N-terminus, the 480-residue chain is Cytochrome b-c1 complex subunit 1, mitochondrial (480 aa).

A mitochondrion-targeting transit peptide spans 1-34; sequence MAASVVCRAATAGAQVLLRARRSPALLRTPALRS. Residues K111 and K138 each carry the N6-acetyllysine modification. The residue at position 163 (K163) is an N6-acetyllysine; alternate. Position 163 is an N6-succinyllysine; alternate (K163). Phosphoserine is present on S212. Position 248 is an N6-acetyllysine (K248).

This sequence belongs to the peptidase M16 family. UQCRC1/QCR1 subfamily. Component of the ubiquinol-cytochrome c oxidoreductase (cytochrome b-c1 complex, complex III, CIII), a multisubunit enzyme composed of 11 subunits. The complex is composed of 3 respiratory subunits cytochrome b, cytochrome c1 and Rieske protein UQCRFS1, 2 core protein subunits UQCRC1/QCR1 and UQCRC2/QCR2, and 6 low-molecular weight protein subunits UQCRH/QCR6, UQCRB/QCR7, UQCRQ/QCR8, UQCR10/QCR9, UQCR11/QCR10 and subunit 9, the cleavage product of Rieske protein UQCRFS1. The complex exists as an obligatory dimer and forms supercomplexes (SCs) in the inner mitochondrial membrane with NADH-ubiquinone oxidoreductase (complex I, CI) and cytochrome c oxidase (complex IV, CIV), resulting in different assemblies (supercomplex SCI(1)III(2)IV(1) and megacomplex MCI(2)III(2)IV(2)). Interacts with UQCC6. Interacts with STMP1. In terms of tissue distribution, expressed in brain, including substantia nigra, striatum, cortex and cerebellum, and in spinal cord, heart, kidney, liver and muscle.

Its subcellular location is the mitochondrion inner membrane. Functionally, component of the ubiquinol-cytochrome c oxidoreductase, a multisubunit transmembrane complex that is part of the mitochondrial electron transport chain which drives oxidative phosphorylation. The respiratory chain contains 3 multisubunit complexes succinate dehydrogenase (complex II, CII), ubiquinol-cytochrome c oxidoreductase (cytochrome b-c1 complex, complex III, CIII) and cytochrome c oxidase (complex IV, CIV), that cooperate to transfer electrons derived from NADH and succinate to molecular oxygen, creating an electrochemical gradient over the inner membrane that drives transmembrane transport and the ATP synthase. The cytochrome b-c1 complex catalyzes electron transfer from ubiquinol to cytochrome c, linking this redox reaction to translocation of protons across the mitochondrial inner membrane, with protons being carried across the membrane as hydrogens on the quinol. In the process called Q cycle, 2 protons are consumed from the matrix, 4 protons are released into the intermembrane space and 2 electrons are passed to cytochrome c. The 2 core subunits UQCRC1/QCR1 and UQCRC2/QCR2 are homologous to the 2 mitochondrial-processing peptidase (MPP) subunits beta-MPP and alpha-MPP respectively, and they seem to have preserved their MPP processing properties. May be involved in the in situ processing of UQCRFS1 into the mature Rieske protein and its mitochondrial targeting sequence (MTS)/subunit 9 when incorporated into complex III. Seems to play an important role in the maintenance of proper mitochondrial function in nigral dopaminergic neurons. The polypeptide is Cytochrome b-c1 complex subunit 1, mitochondrial (UQCRC1) (Homo sapiens (Human)).